Reading from the N-terminus, the 85-residue chain is UPF0473 protein CPR_1590 (85 aa).

It belongs to the UPF0473 family.

The sequence is that of UPF0473 protein CPR_1590 from Clostridium perfringens (strain SM101 / Type A).